The chain runs to 93 residues: UPF0298 protein lwe2074 (93 aa).

This sequence belongs to the UPF0298 family.

The protein localises to the cytoplasm. This is UPF0298 protein lwe2074 from Listeria welshimeri serovar 6b (strain ATCC 35897 / DSM 20650 / CCUG 15529 / CIP 8149 / NCTC 11857 / SLCC 5334 / V8).